Consider the following 485-residue polypeptide: tRNA sulfurtransferase (485 aa).

A THUMP domain is found at 63–167 (DKLVERLSCM…NELLYLVTAI (105 aa)). Residues 185 to 186 (LI), lysine 267, glycine 289, and glutamine 298 contribute to the ATP site. A disulfide bridge connects residues cysteine 346 and cysteine 458. A Rhodanese domain is found at 406–485 (LAENEVILDI…FNNIKVYRQN (80 aa)). Cysteine 458 serves as the catalytic Cysteine persulfide intermediate.

It belongs to the ThiI family.

The protein resides in the cytoplasm. The catalysed reaction is [ThiI sulfur-carrier protein]-S-sulfanyl-L-cysteine + a uridine in tRNA + 2 reduced [2Fe-2S]-[ferredoxin] + ATP + H(+) = [ThiI sulfur-carrier protein]-L-cysteine + a 4-thiouridine in tRNA + 2 oxidized [2Fe-2S]-[ferredoxin] + AMP + diphosphate. The enzyme catalyses [ThiS sulfur-carrier protein]-C-terminal Gly-Gly-AMP + S-sulfanyl-L-cysteinyl-[cysteine desulfurase] + AH2 = [ThiS sulfur-carrier protein]-C-terminal-Gly-aminoethanethioate + L-cysteinyl-[cysteine desulfurase] + A + AMP + 2 H(+). It functions in the pathway cofactor biosynthesis; thiamine diphosphate biosynthesis. Catalyzes the ATP-dependent transfer of a sulfur to tRNA to produce 4-thiouridine in position 8 of tRNAs, which functions as a near-UV photosensor. Also catalyzes the transfer of sulfur to the sulfur carrier protein ThiS, forming ThiS-thiocarboxylate. This is a step in the synthesis of thiazole, in the thiamine biosynthesis pathway. The sulfur is donated as persulfide by IscS. This is tRNA sulfurtransferase from Tolumonas auensis (strain DSM 9187 / NBRC 110442 / TA 4).